Reading from the N-terminus, the 737-residue chain is Alpha-adducin (737 aa).

Met-1 carries the post-translational modification N-acetylmethionine. A disordered region spans residues 1–21; that stretch reads MNGDSRAAVVTSPPPTTAPHK. Ser-12 is modified (phosphoserine). Position 59 is a phosphoserine; by PKA (Ser-59). Ser-64 carries the phosphoserine modification. The residue at position 331 (Thr-331) is a Phosphothreonine. Phosphoserine occurs at positions 334, 353, 355, 358, and 366. The residue at position 408 (Ser-408) is a Phosphoserine; by PKA. 2 disordered regions span residues 421–486 and 576–737; these read FASD…SAVP and RREV…KSDS. Phosphoserine is present on Ser-427. A Phosphothreonine modification is found at Thr-429. At Ser-431 the chain carries Phosphoserine. Ser-436 is subject to Phosphoserine; by PKA. Residue Thr-445 is modified to Phosphothreonine; by ROCK2. A phosphoserine mark is found at Ser-464 and Ser-465. The residue at position 480 (Thr-480) is a Phosphothreonine; by ROCK2. Ser-481 carries the post-translational modification Phosphoserine; by PKA. The segment covering 576–601 has biased composition (basic and acidic residues); sequence RREVERKQKGSEENLDEAREQKEKSP. Residues Ser-586, Ser-600, and Ser-613 each carry the phosphoserine modification. Over residues 602–614 the composition is skewed to pro residues; that stretch reads PDQPAVPHPPPST. Thr-614 is subject to Phosphothreonine. 4 positions are modified to phosphoserine: Ser-678, Ser-707, Ser-710, and Ser-714. The span at 687-714 shows a compositional bias: low complexity; sequence PVAEEAAPSAVEEGAAADPGSDGSPGKS. A compositionally biased stretch (basic residues) spans 715–737; that stretch reads PSKKKKKFRTPSFLKKSKKKSDS. At Ser-716 the chain carries Phosphoserine; by PKC. The segment at 717 to 734 is interaction with calmodulin; sequence KKKKKFRTPSFLKKSKKK. Phosphoserine; by PKA and PKC is present on Ser-726.

The protein belongs to the aldolase class II family. Adducin subfamily. Heterodimer of an alpha and a beta subunit or an alpha and a gamma subunit. As to expression, expressed in all tissues. Found in much higher levels in reticulocytes than the beta subunit.

The protein localises to the cytoplasm. It is found in the cytoskeleton. It localises to the cell membrane. Functionally, membrane-cytoskeleton-associated protein that promotes the assembly of the spectrin-actin network. Binds to calmodulin. This is Alpha-adducin (ADD1) from Homo sapiens (Human).